We begin with the raw amino-acid sequence, 405 residues long: Argininosuccinate synthase (405 aa).

ATP-binding positions include 10-18 (AYSGGLDTS) and Ala37. Positions 88 and 93 each coordinate L-citrulline. Gly118 provides a ligand contact to ATP. Thr120, Asn124, and Asp125 together coordinate L-aspartate. Asn124 is an L-citrulline binding site. Arg128, Ser179, Ser188, Glu264, and Tyr276 together coordinate L-citrulline.

It belongs to the argininosuccinate synthase family. Type 1 subfamily. As to quaternary structure, homotetramer.

The protein localises to the cytoplasm. It carries out the reaction L-citrulline + L-aspartate + ATP = 2-(N(omega)-L-arginino)succinate + AMP + diphosphate + H(+). It participates in amino-acid biosynthesis; L-arginine biosynthesis; L-arginine from L-ornithine and carbamoyl phosphate: step 2/3. This chain is Argininosuccinate synthase, found in Pseudomonas fluorescens (strain Pf0-1).